The primary structure comprises 260 residues: Large ribosomal subunit protein uL2y (260 aa).

The tract at residues 227 to 248 (RRDKSAGAKVGQIAARRTGRRR) is disordered.

It belongs to the universal ribosomal protein uL2 family.

The sequence is that of Large ribosomal subunit protein uL2y (RPL8B) from Arabidopsis thaliana (Mouse-ear cress).